The primary structure comprises 335 residues: UPF0284 protein TON_0688 (335 aa).

It belongs to the UPF0284 family.

This chain is UPF0284 protein TON_0688, found in Thermococcus onnurineus (strain NA1).